The primary structure comprises 161 residues: Putative pre-16S rRNA nuclease (161 aa).

The protein belongs to the YqgF nuclease family.

The protein resides in the cytoplasm. Functionally, could be a nuclease involved in processing of the 5'-end of pre-16S rRNA. This chain is Putative pre-16S rRNA nuclease, found in Rhodospirillum rubrum (strain ATCC 11170 / ATH 1.1.1 / DSM 467 / LMG 4362 / NCIMB 8255 / S1).